The following is a 169-amino-acid chain: Cell division inhibitor SulA (169 aa).

Over residues 1 to 15 (MFTSAHANRSAQASA) the composition is skewed to polar residues. Positions 1-22 (MFTSAHANRSAQASASAGHYAH) are disordered. Residues 106–112 (ALRTGNY) form a ftsZ binding region. The lon protease binding stretch occupies residues 162-169 (KIHSNLYH).

This sequence belongs to the SulA family. As to quaternary structure, interacts with FtsZ. Is rapidly cleaved and degraded by the Lon protease once DNA damage is repaired.

In terms of biological role, component of the SOS system and an inhibitor of cell division. Accumulation of SulA causes rapid cessation of cell division and the appearance of long, non-septate filaments. In the presence of GTP, binds a polymerization-competent form of FtsZ in a 1:1 ratio, thus inhibiting FtsZ polymerization and therefore preventing it from participating in the assembly of the Z ring. This mechanism prevents the premature segregation of damaged DNA to daughter cells during cell division. The protein is Cell division inhibitor SulA of Klebsiella pneumoniae (strain 342).